We begin with the raw amino-acid sequence, 462 residues long: L-seryl-tRNA(Sec) selenium transferase (462 aa).

K294 carries the post-translational modification N6-(pyridoxal phosphate)lysine.

Belongs to the SelA family. As to quaternary structure, homodecamer; pentamer of dimers. Binds only one seryl-tRNA(Sec) per dimer. It depends on pyridoxal 5'-phosphate as a cofactor.

The protein localises to the cytoplasm. It catalyses the reaction L-seryl-tRNA(Sec) + selenophosphate + H(+) = L-selenocysteinyl-tRNA(Sec) + phosphate. The protein operates within aminoacyl-tRNA biosynthesis; selenocysteinyl-tRNA(Sec) biosynthesis; selenocysteinyl-tRNA(Sec) from L-seryl-tRNA(Sec) (bacterial route): step 1/1. Functionally, converts seryl-tRNA(Sec) to selenocysteinyl-tRNA(Sec) required for selenoprotein biosynthesis. This chain is L-seryl-tRNA(Sec) selenium transferase, found in Yersinia pestis bv. Antiqua (strain Antiqua).